A 445-amino-acid chain; its full sequence is Exodeoxyribonuclease 7 large subunit (445 aa).

The protein belongs to the XseA family. As to quaternary structure, heterooligomer composed of large and small subunits.

The protein localises to the cytoplasm. It carries out the reaction Exonucleolytic cleavage in either 5'- to 3'- or 3'- to 5'-direction to yield nucleoside 5'-phosphates.. Bidirectionally degrades single-stranded DNA into large acid-insoluble oligonucleotides, which are then degraded further into small acid-soluble oligonucleotides. The polypeptide is Exodeoxyribonuclease 7 large subunit (Pasteurella multocida (strain Pm70)).